The sequence spans 80 residues: MKKQNLIDMEGTVTESLPNATFRACLDNGCQVLTHISGRMRRSYIRILPGDRVRVELSPYDLTKGRIIYRLRSRHTNNSQ.

The S1-like domain occupies 1 to 72; sequence MKKQNLIDME…TKGRIIYRLR (72 aa).

This sequence belongs to the IF-1 family. As to quaternary structure, component of the 30S ribosomal translation pre-initiation complex which assembles on the 30S ribosome in the order IF-2 and IF-3, IF-1 and N-formylmethionyl-tRNA(fMet); mRNA recruitment can occur at any time during PIC assembly.

It is found in the plastid. The protein resides in the chloroplast. One of the essential components for the initiation of protein synthesis. Stabilizes the binding of IF-2 and IF-3 on the 30S subunit to which N-formylmethionyl-tRNA(fMet) subsequently binds. Helps modulate mRNA selection, yielding the 30S pre-initiation complex (PIC). Upon addition of the 50S ribosomal subunit IF-1, IF-2 and IF-3 are released leaving the mature 70S translation initiation complex. This Adiantum capillus-veneris (Maidenhair fern) protein is Translation initiation factor IF-1, chloroplastic.